We begin with the raw amino-acid sequence, 588 residues long: ATP-dependent lipid A-core flippase (588 aa).

6 consecutive transmembrane segments (helical) span residues 23 to 43 (FWPV…IDAG), 56 to 76 (FITI…IGIT), 141 to 161 (DALT…TVMM), 162 to 182 (VICW…GIIV), 257 to 277 (LVIA…STVI), and 278 to 298 (TISA…IKPM). The 283-residue stretch at 28–310 (LLGVLANILY…LTTLNATIQR (283 aa)) folds into the ABC transmembrane type-1 domain. In terms of domain architecture, ABC transporter spans 342 to 576 (IEFKHVYHAY…DGHYAQLYKV (235 aa)). Residue 375-382 (GHSGSGKT) participates in ATP binding.

It belongs to the ABC transporter superfamily. Lipid exporter (TC 3.A.1.106) family. As to quaternary structure, homodimer.

It localises to the cell inner membrane. It carries out the reaction ATP + H2O + lipid A-core oligosaccharideSide 1 = ADP + phosphate + lipid A-core oligosaccharideSide 2.. Involved in lipopolysaccharide (LPS) biosynthesis. Translocates lipid A-core from the inner to the outer leaflet of the inner membrane. Transmembrane domains (TMD) form a pore in the inner membrane and the ATP-binding domain (NBD) is responsible for energy generation. The polypeptide is ATP-dependent lipid A-core flippase (Legionella pneumophila subsp. pneumophila (strain Philadelphia 1 / ATCC 33152 / DSM 7513)).